A 151-amino-acid chain; its full sequence is UPF0756 membrane protein HS_0993 (151 aa).

The next 4 helical transmembrane spans lie at 1 to 21 (MSLQ…LGVL), 52 to 72 (YGVN…IVSG), 81 to 101 (ALIH…AWFG), and 123 to 143 (ILGV…AGIL).

Belongs to the UPF0756 family.

The protein localises to the cell membrane. In Histophilus somni (strain 129Pt) (Haemophilus somnus), this protein is UPF0756 membrane protein HS_0993.